The chain runs to 326 residues: L-carnitine dehydrogenase (326 aa).

19-24 (GTGVIG) is an NAD(+) binding site.

This sequence belongs to the 3-hydroxyacyl-CoA dehydrogenase family. L-carnitine dehydrogenase subfamily. Homodimer.

The protein resides in the cytoplasm. The enzyme catalyses carnitine + NAD(+) = 3-dehydrocarnitine + NADH + H(+). Its pathway is amine and polyamine metabolism; carnitine metabolism. In terms of biological role, catalyzes the NAD(+)-dependent oxidation of L-carnitine to 3-dehydrocarnitine. In Bacillus cereus (strain ZK / E33L), this protein is L-carnitine dehydrogenase.